A 585-amino-acid polypeptide reads, in one-letter code: Arginine--tRNA ligase (585 aa).

Residues 126-136 carry the 'HIGH' region motif; that stretch reads PNIAKEMHVGH.

This sequence belongs to the class-I aminoacyl-tRNA synthetase family. In terms of assembly, monomer.

It localises to the cytoplasm. The enzyme catalyses tRNA(Arg) + L-arginine + ATP = L-arginyl-tRNA(Arg) + AMP + diphosphate. This chain is Arginine--tRNA ligase, found in Cyanothece sp. (strain PCC 7425 / ATCC 29141).